Here is a 140-residue protein sequence, read N- to C-terminus: MAVQRTFSILKPDATERNLTGAINALIEKAGLRIVAQKRIRMTREQAETFYAVHKERPFFGELVDFMISGPVVVQVLEGEDAVLKHRDVMGATDPSKAADGTIRKLHAKSIGENSVHGSDAPETAAIEIAQFFSGNEIVG.

Positions 11, 59, 87, 93, 104, and 114 each coordinate ATP. The active-site Pros-phosphohistidine intermediate is histidine 117.

Belongs to the NDK family. Homotetramer. It depends on Mg(2+) as a cofactor.

The protein localises to the cytoplasm. The catalysed reaction is a 2'-deoxyribonucleoside 5'-diphosphate + ATP = a 2'-deoxyribonucleoside 5'-triphosphate + ADP. The enzyme catalyses a ribonucleoside 5'-diphosphate + ATP = a ribonucleoside 5'-triphosphate + ADP. Major role in the synthesis of nucleoside triphosphates other than ATP. The ATP gamma phosphate is transferred to the NDP beta phosphate via a ping-pong mechanism, using a phosphorylated active-site intermediate. In Rhodopseudomonas palustris (strain BisA53), this protein is Nucleoside diphosphate kinase.